The following is a 269-amino-acid chain: MKKIATATIATAGFATIAIASGNQAHASEQDNYGYNPNDPTSYSYTYTIDAQGNYHYTWKGNWHPSQLNQDNGYYSYYYYNGYNNYNYNNYNNGYSYNNYSRYNNYSNNNQSYNYNNYNSYNTNSYRTGGLGASYSTSSNNVQVTTTMAPSSNGRSISSGYTSGRNLYTSGQCTYYVFDRVGGKIGSTWGNASNWANAAARAGYTVNNTPKAGAIMQTTQGAYGHVAYVESVNSNGSVRVSEMNYGYGPGVVTSRTISASQAAGYNFIH.

A signal peptide spans 1–27; the sequence is MKKIATATIATAGFATIAIASGNQAHA. Repeat copies occupy residues 83–85, 88–90, 91–93, 97–99, 103–105, 106–108, and 115–117. Residues 83–115 form a 7 X 3 AA repeats of Y-[NS]-N region; the sequence is YNNYNYNNYNNGYSYNNYSRYNNYSNNNQSYNY. A Peptidase C51 domain is found at 148–269; it reads MAPSSNGRSI…SQAAGYNFIH (122 aa).

The protein localises to the secreted. Not known; immunogenic protein. The protein is Staphylococcal secretory antigen ssaA2 (ssaA2) of Staphylococcus aureus (strain MSSA476).